The primary structure comprises 260 residues: Tropinone reductase 2 (260 aa).

18–41 (SRGIGYGIVEELASLGASVYTCSR) lines the NADP(+) pocket. Substrate is bound at residue Ser146. Residue Tyr159 is the Proton acceptor of the active site. 192-196 (IATSL) provides a ligand contact to NADP(+).

The protein belongs to the short-chain dehydrogenases/reductases (SDR) family. In terms of assembly, homodimer.

It carries out the reaction pseudotropine + NADP(+) = tropinone + NADPH + H(+). The protein operates within alkaloid biosynthesis; tropane alkaloid biosynthesis. In terms of biological role, catalyzes the stereospecific reduction of tropinone to pseudotropine. In Datura stramonium (Jimsonweed), this protein is Tropinone reductase 2 (TR2).